Reading from the N-terminus, the 412-residue chain is FAD-dependent monooxygenase nscC (412 aa).

The N-terminal stretch at 1–21 is a signal peptide; the sequence is MGKQQETILIIGAGISGLATS. The FAD site is built by E35 and A46. N-linked (GlcNAc...) asparagine glycosylation occurs at N92. R119 serves as a coordination point for FAD. N-linked (GlcNAc...) asparagine glycans are attached at residues N170 and N231. Positions 326 and 339 each coordinate FAD.

This sequence belongs to the paxM FAD-dependent monooxygenase family. FAD serves as cofactor.

The protein operates within secondary metabolite biosynthesis. Functionally, FAD-dependent monooxygenase; part of the gene cluster that mediates the biosynthesis of neosartoricin B, a prenylated anthracenone that probably exhibits T-cell antiproliferative activity, suggestive of a physiological role as an immunosuppressive agent. The non-reducing polyketide synthase nscA probably synthesizes and cyclizes the decaketide backbone. The hydrolase nscB then mediates the product release through hydrolysis followed by spontaneous decarboxylation. The prenyltransferase nscD catalyzes the addition of the dimethylallyl group to the aromatic C5. The FAD-dependent monooxygenase nscC is then responsible for the stereospecific hydroxylation at C2. Neosartoricin B can be converted into two additional compounds neosartoricins C and D. Neosartoricin C is a spirocyclic compound that is cyclized through the attack of C3 hydroxyl on C14, followed by dehydration. On the other hand, neosartoricin D is a further cyclized compound in which attack of C2 on C14 in neosartoricin C results in the formation of the acetal-containing dioxabicyclo-octanone ring. Both of these compounds are novel and possibly represent related metabolites of the gene cluster. This is FAD-dependent monooxygenase nscC from Trichophyton tonsurans (strain CBS 112818) (Scalp ringworm fungus).